Reading from the N-terminus, the 238-residue chain is Probable transcriptional regulatory protein SSP2054 (238 aa).

Belongs to the TACO1 family. YeeN subfamily.

It is found in the cytoplasm. The chain is Probable transcriptional regulatory protein SSP2054 from Staphylococcus saprophyticus subsp. saprophyticus (strain ATCC 15305 / DSM 20229 / NCIMB 8711 / NCTC 7292 / S-41).